A 909-amino-acid polypeptide reads, in one-letter code: Glucan endo-1,3-beta-D-glucosidase ARB_01444 (909 aa).

The first 23 residues, 1–23 (MKPYTTLPGVAVLVSLLTQSAHA), serve as a signal peptide directing secretion. Residues 136–187 (KRSPAPQRHPPAPTKATAGYQFTNCTSTSNPGPTATSPTSGIPSQPSAPPAT) form a disordered region. Polar residues predominate over residues 155-180 (YQFTNCTSTSNPGPTATSPTSGIPSQ). 3 N-linked (GlcNAc...) asparagine glycosylation sites follow: Asn159, Asn239, and Asn259. Residues 191 to 430 (QDIFQPIAKD…KGVIQVAKNP (240 aa)) form a beta-sandwich subdomain region. The region spanning 191-909 (QDIFQPIAKD…AGEYSTYIAL (719 aa)) is the GH81 domain. The alpha/beta subdomain stretch occupies residues 431-524 (SAEEGEGIYD…GDSWTMVEGN (94 aa)). The tract at residues 539-909 (SSQVTLSEGA…AGEYSTYIAL (371 aa)) is (alpha/beta)6 barrel subdomain. The active site involves Asp654. (1,3-beta-D-glucosyl)n-binding residues include His658, Asp727, Glu729, and Glu733. Catalysis depends on residues Glu729 and Glu733. A may provide specificity for triple-helical beta-glucan region spans residues 798–800 (KID). Tyr811 contacts (1,3-beta-D-glucosyl)n.

Belongs to the glycosyl hydrolase 81 family.

It localises to the secreted. Its subcellular location is the cell wall. The catalysed reaction is Hydrolysis of (1-&gt;3)-beta-D-glucosidic linkages in (1-&gt;3)-beta-D-glucans.. Cleaves internal linkages in 1,3-beta-glucan. Probably involved in cell separation after cytokinesis. This Arthroderma benhamiae (strain ATCC MYA-4681 / CBS 112371) (Trichophyton mentagrophytes) protein is Glucan endo-1,3-beta-D-glucosidase ARB_01444.